The following is a 280-amino-acid chain: UDP-3-O-acyl-N-acetylglucosamine deacetylase (280 aa).

Zn(2+)-binding residues include His79, His237, and Asp241. Residue His264 is the Proton donor of the active site.

The protein belongs to the LpxC family. Zn(2+) is required as a cofactor.

It catalyses the reaction a UDP-3-O-[(3R)-3-hydroxyacyl]-N-acetyl-alpha-D-glucosamine + H2O = a UDP-3-O-[(3R)-3-hydroxyacyl]-alpha-D-glucosamine + acetate. Its pathway is glycolipid biosynthesis; lipid IV(A) biosynthesis; lipid IV(A) from (3R)-3-hydroxytetradecanoyl-[acyl-carrier-protein] and UDP-N-acetyl-alpha-D-glucosamine: step 2/6. Functionally, catalyzes the hydrolysis of UDP-3-O-myristoyl-N-acetylglucosamine to form UDP-3-O-myristoylglucosamine and acetate, the committed step in lipid A biosynthesis. This is UDP-3-O-acyl-N-acetylglucosamine deacetylase from Chlamydia felis (strain Fe/C-56) (Chlamydophila felis).